The sequence spans 570 residues: MPANIPRSDYAAMYGPTTGDRVRLADTDLIIEVERDLTGPYGEEVKFGGGKVIRDGMGQAQTTRAGGAVDTVITNALILDWTGIYKADVGLKDGRIHAIGKAGNPDTQPNVTIIVGPGTEVIAGEGRILTAGGFDSHIHYICPQQIEDALHSGLTTMLGGGTGPAHGTLATTCTPGAWHLGRMMQAADAFPMNLAFAGKGNASLPAAIEEQVNAGACALKLHEDWGTTPAAIDCCLGVADAMDVQVMIHTDTLNESGFVEHTVKAMKGRTIHAFHTEGAGGGHAPDIIKICGEEFVLPSSTNPTRPFTVNTIEEHLDMLMVCHHLDKSIPEDVAFAESRIRRETIAAEDILHDMGAFSIIASDSQAMGRVGEVIIRTWQTADKMKKQRGRLSEETGENDNFRVRRYVAKYTINPAIAHGIAHEIGSIEVGKRADLVLWNPAFFGVKPEMVLMGGTIACAQMGDPNASIPTPQPVYSRPMWGAYGRSVEHSAVTFVSEAAQAAGIGKTLGLAKQTLAVKGTRGIGKSALKLNTATPEIEVHPETYEVRANGELLTCQPAEELPLAQRYFLF.

Residues 132–570 (GGFDSHIHYI…LPLAQRYFLF (439 aa)) form the Urease domain. Positions 137, 139, and 220 each coordinate Ni(2+). Lysine 220 carries the N6-carboxylysine modification. Histidine 222 contacts substrate. Ni(2+) contacts are provided by histidine 249 and histidine 275. The active-site Proton donor is histidine 323. Aspartate 363 contacts Ni(2+).

Belongs to the metallo-dependent hydrolases superfamily. Urease alpha subunit family. Heterotrimer of UreA (gamma), UreB (beta) and UreC (alpha) subunits. Three heterotrimers associate to form the active enzyme. The cofactor is Ni cation. In terms of processing, carboxylation allows a single lysine to coordinate two nickel ions.

The protein resides in the cytoplasm. It catalyses the reaction urea + 2 H2O + H(+) = hydrogencarbonate + 2 NH4(+). The protein operates within nitrogen metabolism; urea degradation; CO(2) and NH(3) from urea (urease route): step 1/1. In Ruegeria sp. (strain TM1040) (Silicibacter sp.), this protein is Urease subunit alpha.